Reading from the N-terminus, the 479-residue chain is MKALNKETAPKVQRPERIIQFGEGNFLRAFVDWIIYNMNQKTDFNSSVVVVQPIDKGMVDMLNAQDDLYHVNLQGLDKGEVVNSLTMIDVISRALNPYTQNDEFMKLAEQPEMRFVISNTTEAGIAFDPTCKLEDAPASSYPGKLTQLLYHRFKTFNGDKTKGLIIFPCELIFLNGHKLKETIYQYIDLWNLGNEFKTWFEEACGVYATLVDRIVPGFPRKDIAAIKEKIQYDDNLVVQAEIFHLWVIEAPQEVAKEFPADKAGLNVLFVPSEAPYHERKVTLLNGPHTVLSPVAYLSGVNIVRDACQHEVIGKYIHKVMFDELMETLNLPKEELKKFAEDVLERFNNPFVDHAVTSIMLNSFPKYETRDLPGLKTYLERKGELPKGLVLGLAAIITYYKGGVRADGAEIVPNDAPEIMNLLKELWATGCTKKVTEGVLAAEFIWGEDLNKIPGLAAAVKADLDSIQEKGMLETVKGIL.

Isoleucine 18–alanine 29 lines the NAD(+) pocket.

Belongs to the mannitol dehydrogenase family. UxaB subfamily.

It catalyses the reaction D-altronate + NAD(+) = keto-D-tagaturonate + NADH + H(+). It functions in the pathway carbohydrate metabolism; pentose and glucuronate interconversion. The polypeptide is Altronate oxidoreductase (Bacteroides thetaiotaomicron (strain ATCC 29148 / DSM 2079 / JCM 5827 / CCUG 10774 / NCTC 10582 / VPI-5482 / E50)).